The primary structure comprises 396 residues: Ribosomal RNA small subunit methyltransferase H (396 aa).

Residues 101 to 103 (GGH), D120, Y147, D171, and Q178 contribute to the S-adenosyl-L-methionine site.

This sequence belongs to the methyltransferase superfamily. RsmH family.

It is found in the cytoplasm. The catalysed reaction is cytidine(1402) in 16S rRNA + S-adenosyl-L-methionine = N(4)-methylcytidine(1402) in 16S rRNA + S-adenosyl-L-homocysteine + H(+). Specifically methylates the N4 position of cytidine in position 1402 (C1402) of 16S rRNA. The polypeptide is Ribosomal RNA small subunit methyltransferase H (Mycobacterium bovis (strain ATCC BAA-935 / AF2122/97)).